A 272-amino-acid chain; its full sequence is uncharacterized protein (272 aa).

An N-terminal signal peptide occupies residues methionine 1–alanine 20. A lipid anchor (N-palmitoyl cysteine) is attached at cysteine 21. Cysteine 21 carries S-diacylglycerol cysteine lipidation.

It belongs to the MG439/MG440 family.

It localises to the cell membrane. This is an uncharacterized protein from Mycoplasma genitalium (strain ATCC 33530 / DSM 19775 / NCTC 10195 / G37) (Mycoplasmoides genitalium).